A 262-amino-acid chain; its full sequence is Thiazole synthase (262 aa).

The active-site Schiff-base intermediate with DXP is K97. Residues G158, 185 to 186, and 207 to 208 contribute to the 1-deoxy-D-xylulose 5-phosphate site; these read AG and NT. The tract at residues 243–262 is disordered; that stretch reads DKAQASTPTVGQPFWHSAEY.

The protein belongs to the ThiG family. As to quaternary structure, homotetramer. Forms heterodimers with either ThiH or ThiS.

The protein localises to the cytoplasm. It carries out the reaction [ThiS sulfur-carrier protein]-C-terminal-Gly-aminoethanethioate + 2-iminoacetate + 1-deoxy-D-xylulose 5-phosphate = [ThiS sulfur-carrier protein]-C-terminal Gly-Gly + 2-[(2R,5Z)-2-carboxy-4-methylthiazol-5(2H)-ylidene]ethyl phosphate + 2 H2O + H(+). Its pathway is cofactor biosynthesis; thiamine diphosphate biosynthesis. Its function is as follows. Catalyzes the rearrangement of 1-deoxy-D-xylulose 5-phosphate (DXP) to produce the thiazole phosphate moiety of thiamine. Sulfur is provided by the thiocarboxylate moiety of the carrier protein ThiS. In vitro, sulfur can be provided by H(2)S. The protein is Thiazole synthase of Neisseria meningitidis serogroup A / serotype 4A (strain DSM 15465 / Z2491).